A 47-amino-acid chain; its full sequence is Large ribosomal subunit protein bL33 (47 aa).

Belongs to the bacterial ribosomal protein bL33 family.

This chain is Large ribosomal subunit protein bL33, found in Staphylococcus saprophyticus.